A 286-amino-acid polypeptide reads, in one-letter code: Homoserine kinase (286 aa).

An ATP-binding site is contributed by 78–88 (PLARGLGSSSS).

This sequence belongs to the GHMP kinase family. Homoserine kinase subfamily.

The protein localises to the cytoplasm. It carries out the reaction L-homoserine + ATP = O-phospho-L-homoserine + ADP + H(+). Its pathway is amino-acid biosynthesis; L-threonine biosynthesis; L-threonine from L-aspartate: step 4/5. Functionally, catalyzes the ATP-dependent phosphorylation of L-homoserine to L-homoserine phosphate. This is Homoserine kinase from Streptococcus thermophilus (strain CNRZ 1066).